The sequence spans 113 residues: UPF0102 protein Dgeo_1894 (113 aa).

It belongs to the UPF0102 family.

This chain is UPF0102 protein Dgeo_1894, found in Deinococcus geothermalis (strain DSM 11300 / CIP 105573 / AG-3a).